Reading from the N-terminus, the 373-residue chain is Queuine tRNA-ribosyltransferase (373 aa).

Asp-90 functions as the Proton acceptor in the catalytic mechanism. Substrate is bound by residues 90–94 (DSGGF), Asp-144, Gln-193, and Gly-220. Residues 251–257 (GVGTPED) form an RNA binding region. The active-site Nucleophile is Asp-270. Residues 275–279 (TRNAR) are RNA binding; important for wobble base 34 recognition. Zn(2+) is bound by residues Cys-308, Cys-310, Cys-313, and His-339.

This sequence belongs to the queuine tRNA-ribosyltransferase family. Homodimer. Within each dimer, one monomer is responsible for RNA recognition and catalysis, while the other monomer binds to the replacement base PreQ1. It depends on Zn(2+) as a cofactor.

It catalyses the reaction 7-aminomethyl-7-carbaguanine + guanosine(34) in tRNA = 7-aminomethyl-7-carbaguanosine(34) in tRNA + guanine. It participates in tRNA modification; tRNA-queuosine biosynthesis. Catalyzes the base-exchange of a guanine (G) residue with the queuine precursor 7-aminomethyl-7-deazaguanine (PreQ1) at position 34 (anticodon wobble position) in tRNAs with GU(N) anticodons (tRNA-Asp, -Asn, -His and -Tyr). Catalysis occurs through a double-displacement mechanism. The nucleophile active site attacks the C1' of nucleotide 34 to detach the guanine base from the RNA, forming a covalent enzyme-RNA intermediate. The proton acceptor active site deprotonates the incoming PreQ1, allowing a nucleophilic attack on the C1' of the ribose to form the product. After dissociation, two additional enzymatic reactions on the tRNA convert PreQ1 to queuine (Q), resulting in the hypermodified nucleoside queuosine (7-(((4,5-cis-dihydroxy-2-cyclopenten-1-yl)amino)methyl)-7-deazaguanosine). This is Queuine tRNA-ribosyltransferase from Campylobacter jejuni subsp. doylei (strain ATCC BAA-1458 / RM4099 / 269.97).